The chain runs to 81 residues: Photosystem I iron-sulfur center (81 aa).

4Fe-4S ferredoxin-type domains are found at residues 2-31 (SHSVKIYDTCIGCTQCVRACPTDVLEMVPW) and 39-68 (IASAPRTEDCVGCKRCESACPTDFLSVRVY). Residues cysteine 11, cysteine 14, cysteine 17, cysteine 21, cysteine 48, cysteine 51, cysteine 54, and cysteine 58 each coordinate [4Fe-4S] cluster.

As to quaternary structure, the eukaryotic PSI reaction center is composed of at least 11 subunits. [4Fe-4S] cluster serves as cofactor.

The protein localises to the plastid. The protein resides in the chloroplast thylakoid membrane. The enzyme catalyses reduced [plastocyanin] + hnu + oxidized [2Fe-2S]-[ferredoxin] = oxidized [plastocyanin] + reduced [2Fe-2S]-[ferredoxin]. Its function is as follows. Apoprotein for the two 4Fe-4S centers FA and FB of photosystem I (PSI); essential for photochemical activity. FB is the terminal electron acceptor of PSI, donating electrons to ferredoxin. The C-terminus interacts with PsaA/B/D and helps assemble the protein into the PSI complex. Required for binding of PsaD and PsaE to PSI. PSI is a plastocyanin/cytochrome c6-ferredoxin oxidoreductase, converting photonic excitation into a charge separation, which transfers an electron from the donor P700 chlorophyll pair to the spectroscopically characterized acceptors A0, A1, FX, FA and FB in turn. This Nephroselmis olivacea (Green alga) protein is Photosystem I iron-sulfur center.